The following is a 2327-amino-acid chain: Pre-mRNA-processing-splicing factor 8 homolog (2327 aa).

The span at 1-14 shows a compositional bias: polar residues; the sequence is MDDTNSNINQSNES. A disordered region spans residues 1–20; the sequence is MDDTNSNINQSNESQHLEEK. Positions 801 to 1292 are reverse transcriptase homology domain; that stretch reads TTVHWLEKRR…KIQTRVKIGL (492 aa). Residues 1293 to 1566 form a linker region; that stretch reads NSKMPNRFPP…TLKISLIQIF (274 aa). The important for branch point selection stretch occupies residues 1502 to 1515; sequence MKYKKLTHAQRSGL. A restriction endonuclease homology domain region spans residues 1570-1740; it reads LWQKIHESLV…LRERIRKGLQ (171 aa). The interval 1657–2023 is involved in interaction with pre-mRNA 5' splice site; that stretch reads GDFDSHDIER…QIAEIEKQKT (367 aa). Residues 1755-2008 are RNase H homology domain; the sequence is NFGELFSNKI…ILGMEISAPS (254 aa). Positions 2093-2223 constitute an MPN domain; the sequence is TYVFPKNILK…LTAYHLTPSG (131 aa).

As to quaternary structure, part of the U5 snRNP complex and of the U4/U6-U5 tri-snRNP complex.

The protein resides in the nucleus speckle. Functions as a scaffold that mediates the ordered assembly of spliceosomal proteins and snRNAs. Required for the assembly of the U4/U6-U5 tri-snRNP complex. Functions as a scaffold that positions spliceosomal U2, U5 and U6 snRNAs at splice sites on pre-mRNA substrates, so that splicing can occur. Interacts with both the 5' and the 3' splice site. This chain is Pre-mRNA-processing-splicing factor 8 homolog (prpf8), found in Dictyostelium discoideum (Social amoeba).